Reading from the N-terminus, the 366-residue chain is tRNA (guanine(26)-N(2))-dimethyltransferase (366 aa).

A disordered region spans residues 1 to 28 (MEVSEGSVTVEVPEERHGASEGSGEGVF). In terms of domain architecture, Trm1 methyltransferase spans 1–365 (MEVSEGSVTV…ADVADIRNAV (365 aa)). The S-adenosyl-L-methionine site is built by arginine 37, arginine 64, and aspartate 79. Cysteine 234, cysteine 237, cysteine 254, and cysteine 257 together coordinate Zn(2+).

It belongs to the class I-like SAM-binding methyltransferase superfamily. Trm1 family.

It catalyses the reaction guanosine(26) in tRNA + 2 S-adenosyl-L-methionine = N(2)-dimethylguanosine(26) in tRNA + 2 S-adenosyl-L-homocysteine + 2 H(+). Dimethylates a single guanine residue at position 26 of a number of tRNAs using S-adenosyl-L-methionine as donor of the methyl groups. The sequence is that of tRNA (guanine(26)-N(2))-dimethyltransferase from Natronomonas pharaonis (strain ATCC 35678 / DSM 2160 / CIP 103997 / JCM 8858 / NBRC 14720 / NCIMB 2260 / Gabara) (Halobacterium pharaonis).